The chain runs to 413 residues: S-adenosylmethionine synthase (413 aa).

His15 is a binding site for ATP. Residue Asp17 coordinates Mg(2+). Glu43 contributes to the K(+) binding site. Positions 56 and 100 each coordinate L-methionine. The segment at 100 to 110 (QSPDISQGVNE) is flexible loop. ATP is bound by residues 171-173 (DGK), 248-249 (KF), Asp257, 263-264 (RK), Ala280, and Lys284. An L-methionine-binding site is contributed by Asp257. Residue Lys288 participates in L-methionine binding.

It belongs to the AdoMet synthase family. In terms of assembly, homotetramer; dimer of dimers. The cofactor is Mg(2+). Requires K(+) as cofactor.

The protein resides in the cytoplasm. It carries out the reaction L-methionine + ATP + H2O = S-adenosyl-L-methionine + phosphate + diphosphate. It functions in the pathway amino-acid biosynthesis; S-adenosyl-L-methionine biosynthesis; S-adenosyl-L-methionine from L-methionine: step 1/1. In terms of biological role, catalyzes the formation of S-adenosylmethionine (AdoMet) from methionine and ATP. The overall synthetic reaction is composed of two sequential steps, AdoMet formation and the subsequent tripolyphosphate hydrolysis which occurs prior to release of AdoMet from the enzyme. In Prochlorococcus marinus (strain MIT 9515), this protein is S-adenosylmethionine synthase.